The sequence spans 465 residues: Iron-sulfur cluster assembly SufBD family protein SE_0610 (465 aa).

It belongs to the iron-sulfur cluster assembly SufBD family.

This Staphylococcus epidermidis (strain ATCC 12228 / FDA PCI 1200) protein is Iron-sulfur cluster assembly SufBD family protein SE_0610.